Here is an 86-residue protein sequence, read N- to C-terminus: MMKVIFTSNRFIDFLIRLLITAIVISPVIIWSWDTVKETTADGMLAAAFVILYSGVLLFILYFCFSALTDLQKPDERKSDERNEDE.

Transmembrane regions (helical) follow at residues 11 to 31 and 45 to 65; these read FIDF…VIIW and LAAA…YFCF.

The protein localises to the cell inner membrane. In terms of biological role, not determined yet. Not required for conjugation transfer in rich, aerobic growth media. This Escherichia coli (strain K12) protein is Protein TrbE (trbE).